A 149-amino-acid polypeptide reads, in one-letter code: L-alanine exporter AlaE (149 aa).

A run of 4 helical transmembrane segments spans residues Phe-17–Met-37, Leu-43–Phe-63, Leu-86–Ala-106, and Ile-111–Tyr-131.

The protein belongs to the AlaE exporter family.

It is found in the cell inner membrane. In terms of biological role, exports L-alanine. In Aliivibrio salmonicida (strain LFI1238) (Vibrio salmonicida (strain LFI1238)), this protein is L-alanine exporter AlaE.